Consider the following 75-residue polypeptide: Cruzioseptin-6 (75 aa).

The first 22 residues, 1 to 22, serve as a signal peptide directing secretion; sequence MAYLKKSLFLVLFLGLVSLSIC. A propeptide spanning residues 23 to 43 is cleaved from the precursor; that stretch reads EEEKREEENEEEQEDDDQSEE. Positions 24–44 are disordered; the sequence is EEKREEENEEEQEDDDQSEEK. Over residues 30–41 the composition is skewed to acidic residues; sequence ENEEEQEDDDQS.

In terms of tissue distribution, expressed by the skin glands.

It is found in the secreted. Its function is as follows. Has antimicrobial activity. This is Cruzioseptin-6 from Cruziohyla calcarifer (Splendid leaf frog).